Consider the following 204-residue polypeptide: MIKKFLLFAMLNIFLTNKAHSNEEIIEISTEIQKEKYIPFLISRGKTQLEDLVKYTLEINPELDKNYVNTVAKTYIDESLIEGVNYDIAYAQMLLETGALKFNGIVSKEQHNFSXIGATNNLTKGNSFSNITEGIKAHIQHLKAYASKQNIKSNMVDPRFYLVKRGSAPTIYDLTGKWAKDKLYDKKLKKILLELLEYNNANKS.

An N-terminal signal peptide occupies residues 1–21 (MIKKFLLFAMLNIFLTNKAHS).

This is an uncharacterized protein from Borreliella burgdorferi (strain ATCC 35210 / DSM 4680 / CIP 102532 / B31) (Borrelia burgdorferi).